Reading from the N-terminus, the 338-residue chain is Glycerol-3-phosphate dehydrogenase [NAD(P)+] (338 aa).

The NADPH site is built by serine 15, tyrosine 16, histidine 36, and lysine 110. Residues lysine 110, glycine 139, and threonine 141 each contribute to the sn-glycerol 3-phosphate site. Residue alanine 143 participates in NADPH binding. Sn-glycerol 3-phosphate is bound by residues lysine 195, aspartate 248, serine 258, arginine 259, and asparagine 260. The active-site Proton acceptor is lysine 195. Arginine 259 provides a ligand contact to NADPH. The NADPH site is built by valine 283 and glutamate 285.

Belongs to the NAD-dependent glycerol-3-phosphate dehydrogenase family.

It localises to the cytoplasm. The enzyme catalyses sn-glycerol 3-phosphate + NAD(+) = dihydroxyacetone phosphate + NADH + H(+). It carries out the reaction sn-glycerol 3-phosphate + NADP(+) = dihydroxyacetone phosphate + NADPH + H(+). It functions in the pathway membrane lipid metabolism; glycerophospholipid metabolism. Catalyzes the reduction of the glycolytic intermediate dihydroxyacetone phosphate (DHAP) to sn-glycerol 3-phosphate (G3P), the key precursor for phospholipid synthesis. This Edwardsiella ictaluri (strain 93-146) protein is Glycerol-3-phosphate dehydrogenase [NAD(P)+].